The primary structure comprises 275 residues: Large ribosomal subunit protein uL2 (275 aa).

The tract at residues 221 to 275 is disordered; it reads RGTAMNPIDHPHGGGEGKNFGKHPVSPWGVQSKGKKTRKNKRTEKYILYNRKYKK. The span at 253-262 shows a compositional bias: basic residues; the sequence is KGKKTRKNKR.

It belongs to the universal ribosomal protein uL2 family. As to quaternary structure, part of the 50S ribosomal subunit. Forms a bridge to the 30S subunit in the 70S ribosome.

Functionally, one of the primary rRNA binding proteins. Required for association of the 30S and 50S subunits to form the 70S ribosome, for tRNA binding and peptide bond formation. It has been suggested to have peptidyltransferase activity; this is somewhat controversial. Makes several contacts with the 16S rRNA in the 70S ribosome. This is Large ribosomal subunit protein uL2 from Wigglesworthia glossinidia brevipalpis.